The sequence spans 920 residues: Isoleucine--tRNA ligase (920 aa).

Positions 58-68 (PYANGHLHLGH) match the 'HIGH' region motif. Glu569 is a binding site for L-isoleucyl-5'-AMP. The 'KMSKS' region motif lies at 610–614 (KMSKS). Lys613 serves as a coordination point for ATP. 4 residues coordinate Zn(2+): Cys895, Cys898, Cys910, and Cys913.

The protein belongs to the class-I aminoacyl-tRNA synthetase family. IleS type 1 subfamily. In terms of assembly, monomer. The cofactor is Zn(2+).

Its subcellular location is the cytoplasm. The enzyme catalyses tRNA(Ile) + L-isoleucine + ATP = L-isoleucyl-tRNA(Ile) + AMP + diphosphate. Its function is as follows. Catalyzes the attachment of isoleucine to tRNA(Ile). As IleRS can inadvertently accommodate and process structurally similar amino acids such as valine, to avoid such errors it has two additional distinct tRNA(Ile)-dependent editing activities. One activity is designated as 'pretransfer' editing and involves the hydrolysis of activated Val-AMP. The other activity is designated 'posttransfer' editing and involves deacylation of mischarged Val-tRNA(Ile). The protein is Isoleucine--tRNA ligase of Helicobacter pylori (strain HPAG1).